Here is a 215-residue protein sequence, read N- to C-terminus: Pyrophosphatase PpaX (215 aa).

Asp-9 acts as the Nucleophile in catalysis.

Belongs to the HAD-like hydrolase superfamily. PpaX family. The cofactor is Mg(2+).

The enzyme catalyses diphosphate + H2O = 2 phosphate + H(+). Its function is as follows. Hydrolyzes pyrophosphate formed during P-Ser-HPr dephosphorylation by HPrK/P. Might play a role in controlling the intracellular pyrophosphate pool. This chain is Pyrophosphatase PpaX, found in Anoxybacillus flavithermus (strain DSM 21510 / WK1).